A 678-amino-acid polypeptide reads, in one-letter code: Vacuolar protein sorting-associated protein 1 (678 aa).

Residues 24 to 311 (LIDLPQITVV…LMHHIRNTLP (288 aa)) form the Dynamin-type G domain. The G1 motif stretch occupies residues 34–41 (RSQSSGKS). 34 to 41 (RSQSSGKS) contacts GTP. The segment at 60–62 (VTR) is G2 motif. Residues 71–96 (NRPSASGKNEETTTDSDGKDQNNSSE) are disordered. Residues 78–90 (KNEETTTDSDGKD) are compositionally biased toward basic and acidic residues. The interval 153-156 (DLPG) is G3 motif. GTP is bound by residues 153–157 (DLPGL) and 222–225 (TKVD). Residues 222-225 (TKVD) form a G4 motif region. A G5 motif region spans residues 252–255 (INRG). Positions 592–678 (TEVIKLLIMS…LQASEIVSNV (87 aa)) constitute a GED domain.

This sequence belongs to the TRAFAC class dynamin-like GTPase superfamily. Dynamin/Fzo/YdjA family.

In Schizosaccharomyces pombe (strain 972 / ATCC 24843) (Fission yeast), this protein is Vacuolar protein sorting-associated protein 1 (vps1).